The primary structure comprises 169 residues: Large ribosomal subunit protein uL10 (169 aa).

Belongs to the universal ribosomal protein uL10 family. In terms of assembly, part of the ribosomal stalk of the 50S ribosomal subunit. The N-terminus interacts with L11 and the large rRNA to form the base of the stalk. The C-terminus forms an elongated spine to which L12 dimers bind in a sequential fashion forming a multimeric L10(L12)X complex.

Its function is as follows. Forms part of the ribosomal stalk, playing a central role in the interaction of the ribosome with GTP-bound translation factors. This chain is Large ribosomal subunit protein uL10, found in Lactobacillus delbrueckii subsp. bulgaricus (strain ATCC 11842 / DSM 20081 / BCRC 10696 / JCM 1002 / NBRC 13953 / NCIMB 11778 / NCTC 12712 / WDCM 00102 / Lb 14).